A 290-amino-acid chain; its full sequence is N-acetylmannosamine kinase (290 aa).

Residues 6-13 (ALDIGGTK) and 132-139 (GVGGGIIL) contribute to the ATP site. Residues His156, Cys166, Cys168, and Cys173 each coordinate Zn(2+).

This sequence belongs to the ROK (NagC/XylR) family. NanK subfamily. In terms of assembly, homodimer.

It carries out the reaction an N-acyl-D-mannosamine + ATP = an N-acyl-D-mannosamine 6-phosphate + ADP + H(+). The protein operates within amino-sugar metabolism; N-acetylneuraminate degradation; D-fructose 6-phosphate from N-acetylneuraminate: step 2/5. Catalyzes the phosphorylation of N-acetylmannosamine (ManNAc) to ManNAc-6-P. The polypeptide is N-acetylmannosamine kinase (Yersinia pseudotuberculosis serotype O:1b (strain IP 31758)).